We begin with the raw amino-acid sequence, 105 residues long: MAAKIKKGDKVVVLTGRDKGRTGEVIQVMPKEERALVRGVNIVKRHQRQTANQEGGIISKEAPIQLSNVAVADPKDGKPTRVGFQVLEDGTKVRVAKRSGERIDG.

It belongs to the universal ribosomal protein uL24 family. As to quaternary structure, part of the 50S ribosomal subunit.

Functionally, one of two assembly initiator proteins, it binds directly to the 5'-end of the 23S rRNA, where it nucleates assembly of the 50S subunit. Its function is as follows. One of the proteins that surrounds the polypeptide exit tunnel on the outside of the subunit. The sequence is that of Large ribosomal subunit protein uL24 from Xanthobacter autotrophicus (strain ATCC BAA-1158 / Py2).